We begin with the raw amino-acid sequence, 382 residues long: Dual-specificity RNA methyltransferase RlmN (382 aa).

The active-site Proton acceptor is the glutamate 95. Residues glutamate 101–aspartate 347 enclose the Radical SAM core domain. A disulfide bond links cysteine 108 and cysteine 352. Residues cysteine 115, cysteine 119, and cysteine 122 each coordinate [4Fe-4S] cluster. S-adenosyl-L-methionine contacts are provided by residues glycine 178–glutamate 179, serine 210, serine 232–histidine 234, and asparagine 309. The S-methylcysteine intermediate role is filled by cysteine 352.

Belongs to the radical SAM superfamily. RlmN family. It depends on [4Fe-4S] cluster as a cofactor.

It localises to the cytoplasm. The enzyme catalyses adenosine(2503) in 23S rRNA + 2 reduced [2Fe-2S]-[ferredoxin] + 2 S-adenosyl-L-methionine = 2-methyladenosine(2503) in 23S rRNA + 5'-deoxyadenosine + L-methionine + 2 oxidized [2Fe-2S]-[ferredoxin] + S-adenosyl-L-homocysteine. It carries out the reaction adenosine(37) in tRNA + 2 reduced [2Fe-2S]-[ferredoxin] + 2 S-adenosyl-L-methionine = 2-methyladenosine(37) in tRNA + 5'-deoxyadenosine + L-methionine + 2 oxidized [2Fe-2S]-[ferredoxin] + S-adenosyl-L-homocysteine. Specifically methylates position 2 of adenine 2503 in 23S rRNA and position 2 of adenine 37 in tRNAs. m2A2503 modification seems to play a crucial role in the proofreading step occurring at the peptidyl transferase center and thus would serve to optimize ribosomal fidelity. This Bordetella avium (strain 197N) protein is Dual-specificity RNA methyltransferase RlmN.